We begin with the raw amino-acid sequence, 415 residues long: Na(+)-translocating NADH-quinone reductase subunit B (415 aa).

4 consecutive transmembrane segments (helical) span residues 23–40, 56–76, 129–149, and 164–184; these read WFAL…PGLV, IMIM…YNAG, FLPI…LFCM, and ILFA…LGIT. T236 bears the FMN phosphoryl threonine mark. 5 helical membrane passes run 275–295, 297–317, 325–345, 358–378, and 381–401; these read VSTL…IASW, IIGG…VIGS, MPWH…FMAT, WAYG…NPAY, and GMML…HVVV.

This sequence belongs to the NqrB/RnfD family. As to quaternary structure, composed of six subunits; NqrA, NqrB, NqrC, NqrD, NqrE and NqrF. Requires riboflavin as cofactor. FMN is required as a cofactor.

It is found in the cell inner membrane. The enzyme catalyses a ubiquinone + n Na(+)(in) + NADH + H(+) = a ubiquinol + n Na(+)(out) + NAD(+). Functionally, NQR complex catalyzes the reduction of ubiquinone-1 to ubiquinol by two successive reactions, coupled with the transport of Na(+) ions from the cytoplasm to the periplasm. NqrA to NqrE are probably involved in the second step, the conversion of ubisemiquinone to ubiquinol. The polypeptide is Na(+)-translocating NADH-quinone reductase subunit B (Vibrio cholerae serotype O1 (strain ATCC 39541 / Classical Ogawa 395 / O395)).